The primary structure comprises 408 residues: Sex comb on midleg-like protein 4 (408 aa).

S55 and S65 each carry phosphoserine. The interval 274-338 (AGGPATTTSG…TRRPSSRNPS (65 aa)) is disordered. The segment covering 278 to 287 (ATTTSGSRTN) has biased composition (polar residues). Positions 288 to 306 (PVPSGGSSSPGLRLPASSP) are enriched in low complexity. In terms of domain architecture, SAM spans 340 to 406 (WTVEDVVRFV…CYHIDKLKQA (67 aa)).

This sequence belongs to the SCM family.

The protein resides in the nucleus. Its function is as follows. Putative Polycomb group (PcG) protein. PcG proteins act by forming multiprotein complexes, which are required to maintain the transcriptionally repressive state of homeotic genes throughout development. This is Sex comb on midleg-like protein 4 (Scml4) from Mus musculus (Mouse).